A 134-amino-acid polypeptide reads, in one-letter code: MPNLIILVFVGGAFGAMCREFIMLSVPRLADGFPMDIFVANIIAAFLLGLTTSFFKKDKINQYVHLMVGTGIMGGLSTFSSFVFGAVEMMKNPTEVLVSICYLVASLIVGFIAVELGLMIGPKEKPKDPQVASE.

Transmembrane regions (helical) follow at residues 4 to 24, 35 to 55, 67 to 87, and 100 to 120; these read LIIL…FIML, MDIF…TSFF, MVGT…FGAV, and ICYL…GLMI. The Na(+) site is built by G74 and S77.

It belongs to the fluoride channel Fluc/FEX (TC 1.A.43) family.

Its subcellular location is the cell inner membrane. The catalysed reaction is fluoride(in) = fluoride(out). Its activity is regulated as follows. Na(+) is not transported, but it plays an essential structural role and its presence is essential for fluoride channel function. In terms of biological role, fluoride-specific ion channel. Important for reducing fluoride concentration in the cell, thus reducing its toxicity. This is Fluoride-specific ion channel FluC 3 from Yersinia pseudotuberculosis serotype I (strain IP32953).